A 146-amino-acid chain; its full sequence is U-scoloptoxin(16)-Er1a (146 aa).

A signal peptide spans 1–26; the sequence is MNTVSVVQFLAVGCAVFVLYGRGVFA.

The protein belongs to the scoloptoxin-16 family. In terms of processing, contains 4 disulfide bonds. Expressed by the venom gland.

The protein resides in the secreted. The protein is U-scoloptoxin(16)-Er1a of Ethmostigmus rubripes (Giant centipede).